The sequence spans 380 residues: Beta-1,3-N-acetylglucosaminyltransferase lunatic fringe (380 aa).

Residues 1 to 8 (MLKRCGRR) are Cytoplasmic-facing. A helical; Signal-anchor for type II membrane protein transmembrane segment spans residues 9–29 (LLLALAGALLACLLVLTADPP). Topologically, residues 30-380 (PPPVPAERGR…TSWCPRSAIF (351 aa)) are lumenal. The interval 85-110 (SRRDVGPPPGGAPRPADGPPRPLAEP) is disordered. A compositionally biased stretch (pro residues) spans 90-107 (GPPPGGAPRPADGPPRPL). Residue arginine 130 participates in substrate binding. An N-linked (GlcNAc...) asparagine glycan is attached at asparagine 168. Cystine bridges form between cysteine 169–cysteine 180 and cysteine 198–cysteine 261. Aspartate 202 contributes to the substrate binding site. Aspartate 203 lines the Mn(2+) pocket. Aspartate 291 is an active-site residue. Histidine 315 serves as a coordination point for Mn(2+). Residues cysteine 365 and cysteine 374 are joined by a disulfide bond.

This sequence belongs to the glycosyltransferase 31 family. It depends on Mn(2+) as a cofactor. Requires Co(2+) as cofactor. In terms of processing, a soluble form may be derived from the membrane form by proteolytic processing.

The protein localises to the golgi apparatus. It is found in the golgi apparatus membrane. It catalyses the reaction 3-O-(alpha-L-fucosyl)-L-threonyl-[EGF-like domain protein] + UDP-N-acetyl-alpha-D-glucosamine = 3-O-(N-acetyl-beta-D-glucosaminyl-(1-&gt;3)-alpha-L-fucosyl)-L-threonyl-[EGF-like domain protein] + UDP + H(+). It carries out the reaction 3-O-(alpha-L-fucosyl)-L-seryl-[EGF-like domain protein] + UDP-N-acetyl-alpha-D-glucosamine = 3-O-(N-acetyl-beta-D-glucosaminyl-(1-&gt;3)-alpha-L-fucosyl)-L-seryl-[EGF-like domain protein] + UDP + H(+). In terms of biological role, glycosyltransferase that initiates the elongation of O-linked fucose residues attached to EGF-like repeats in the extracellular domain of Notch molecules. Modulates NOTCH1 activity by modifying O-fucose residues at specific EGF-like domains resulting in inhibition of NOTCH1 activation by JAG1 and enhancement of NOTCH1 activation by DLL1 via an increase in its binding to DLL1. Decreases the binding of JAG1 to NOTCH2 but not that of DLL1. Essential mediator of somite segmentation and patterning. This is Beta-1,3-N-acetylglucosaminyltransferase lunatic fringe (LFNG) from Bos taurus (Bovine).